The chain runs to 830 residues: P-selectin (830 aa).

Positions 1–41 (MANCQIAILYQRFQRVVFGISQLLCFSALISELTNQKEVAA) are cleaved as a signal peptide. Residues 42 to 771 (WTYHYSTKAY…QAGPLTIQEA (730 aa)) are Extracellular-facing. 2 N-linked (GlcNAc...) asparagine glycosylation sites follow: Asn-54 and Asn-98. Positions 58–158 (KYCQNRYTDL…HCLKKKHALC (101 aa)) constitute a C-type lectin domain. Intrachain disulfides connect Cys-60–Cys-158, Cys-131–Cys-150, Cys-163–Cys-174, Cys-168–Cys-183, Cys-185–Cys-194, Cys-200–Cys-244, Cys-230–Cys-257, Cys-262–Cys-306, Cys-292–Cys-319, Cys-324–Cys-368, Cys-354–Cys-381, Cys-386–Cys-430, Cys-416–Cys-443, Cys-448–Cys-492, Cys-478–Cys-505, Cys-510–Cys-554, Cys-540–Cys-567, Cys-572–Cys-616, Cys-602–Cys-629, Cys-642–Cys-686, Cys-672–Cys-699, Cys-704–Cys-748, and Cys-734–Cys-761. Ca(2+) is bound by residues Glu-121, Asn-123, and Asn-124. Residue Asn-123 participates in a carbohydrate binding. Residues Glu-133 and Asn-146 each contribute to the a carbohydrate site. Positions 146 and 147 each coordinate Ca(2+). Positions 159–195 (YTASCQDMSCSKQGECLETIGNYTCSCYPGFYGPECE) constitute an EGF-like domain. An N-linked (GlcNAc...) asparagine glycan is attached at Asn-180. Sushi domains lie at 198 to 259 (RECG…QCLA), 260 to 321 (AQCP…VCKA), 322 to 383 (VQCQ…TCEA), 384 to 445 (ISCE…VCQA), 446 to 507 (LQCQ…ECQA), 508 to 569 (IPCT…MCEA), 570 to 631 (IKCP…TCKG), 640 to 701 (VQCP…ACRA), and 702 to 763 (VKCS…TCQA). Asn-212 and Asn-219 each carry an N-linked (GlcNAc...) asparagine glycan. A glycan (N-linked (GlcNAc...) asparagine) is linked at Asn-411. N-linked (GlcNAc...) asparagine glycosylation occurs at Asn-460. Asn-518 carries N-linked (GlcNAc...) asparagine glycosylation. Residue Asn-665 is glycosylated (N-linked (GlcNAc...) asparagine). Residues Asn-716, Asn-723, and Asn-741 are each glycosylated (N-linked (GlcNAc...) asparagine). Residues 772–795 (LTYFGGAVASTIGLIMGGTLLALL) traverse the membrane as a helical segment. The Cytoplasmic portion of the chain corresponds to 796–830 (RKRFRQKDDGKCPLNPHSHLGTYGVFTNAAFDPSP). Cys-807 carries S-palmitoyl cysteine; alternate lipidation. The S-stearoyl cysteine; alternate moiety is linked to residue Cys-807. The Endocytosis signal signature appears at 818–821 (YGVF). The interaction with SNX17 stretch occupies residues 821 to 830 (FTNAAFDPSP).

This sequence belongs to the selectin/LECAM family. Interacts with SNX17. Interacts with SELPLG/PSGL1 and PODXL2 and mediates neutrophil adhesion and leukocyte rolling. This interaction requires the sialyl-Lewis X epitope of SELPLG and PODXL2, and specific tyrosine sulfation on SELPLG. Interacts (via C-type lectin domain) with alpha-IIb/beta3 integrin ITGA2B:ITGB3 and alpha-V/beta-3 integrin ITGAV:ITGB3. Interacts with alpha5/beta1 integrin ITGA5:ITGB1 and alpha4/beta1 integrin ITGA4:ITGB. As to expression, stored in the alpha-granules of platelets and Weibel-Palade bodies of endothelial cells. Upon cell activation by agonists, P-selectin is transported rapidly to the cell surface.

It is found in the cell membrane. Its function is as follows. Ca(2+)-dependent receptor for myeloid cells that binds to carbohydrates on neutrophils and monocytes. Mediates the interaction of activated endothelial cells or platelets with leukocytes. The ligand recognized is sialyl-Lewis X. Mediates rapid rolling of leukocyte rolling over vascular surfaces during the initial steps in inflammation through interaction with SELPLG. Mediates cell-cell interactions and cell adhesion via the interaction with integrin alpha-IIb/beta3 (ITGA2B:ITGB3) and integrin alpha-V/beta-3 (ITGAV:ITGB3). This chain is P-selectin (SELP), found in Homo sapiens (Human).